A 28-amino-acid polypeptide reads, in one-letter code: Cyclotide vodo I2 (28 aa).

3 disulfide bridges follow: cysteine 4–cysteine 18, cysteine 8–cysteine 20, and cysteine 13–cysteine 25.

This is a cyclic peptide. In terms of processing, contains 3 disulfide bonds.

Its function is as follows. Probably participates in a plant defense mechanism. The sequence is that of Cyclotide vodo I2 from Viola odorata (Sweet violet).